A 381-amino-acid chain; its full sequence is Succinyl-diaminopimelate desuccinylase (381 aa).

Residue histidine 72 participates in Zn(2+) binding. The active site involves aspartate 74. Aspartate 103 lines the Zn(2+) pocket. Residue glutamate 133 is the Proton acceptor of the active site. 3 residues coordinate Zn(2+): glutamate 134, glutamate 163, and histidine 348.

It belongs to the peptidase M20A family. DapE subfamily. As to quaternary structure, homodimer. Zn(2+) is required as a cofactor. The cofactor is Co(2+).

It carries out the reaction N-succinyl-(2S,6S)-2,6-diaminopimelate + H2O = (2S,6S)-2,6-diaminopimelate + succinate. Its pathway is amino-acid biosynthesis; L-lysine biosynthesis via DAP pathway; LL-2,6-diaminopimelate from (S)-tetrahydrodipicolinate (succinylase route): step 3/3. Functionally, catalyzes the hydrolysis of N-succinyl-L,L-diaminopimelic acid (SDAP), forming succinate and LL-2,6-diaminopimelate (DAP), an intermediate involved in the bacterial biosynthesis of lysine and meso-diaminopimelic acid, an essential component of bacterial cell walls. The polypeptide is Succinyl-diaminopimelate desuccinylase (Anaplasma marginale (strain Florida)).